The primary structure comprises 142 residues: Ribosome-binding factor A (142 aa).

Positions 123–142 are disordered; it reads VQRDLDSAPEDDEPETGTGH. A compositionally biased stretch (acidic residues) spans 129 to 142; sequence SAPEDDEPETGTGH.

Belongs to the RbfA family. As to quaternary structure, monomer. Binds 30S ribosomal subunits, but not 50S ribosomal subunits or 70S ribosomes.

The protein localises to the cytoplasm. In terms of biological role, one of several proteins that assist in the late maturation steps of the functional core of the 30S ribosomal subunit. Associates with free 30S ribosomal subunits (but not with 30S subunits that are part of 70S ribosomes or polysomes). Required for efficient processing of 16S rRNA. May interact with the 5'-terminal helix region of 16S rRNA. This Methylobacterium radiotolerans (strain ATCC 27329 / DSM 1819 / JCM 2831 / NBRC 15690 / NCIMB 10815 / 0-1) protein is Ribosome-binding factor A.